Here is a 515-residue protein sequence, read N- to C-terminus: Cytochrome P450 monooxygenase ptmJ (515 aa).

Helical transmembrane passes span 6-26 (LGPF…LFVI), 50-70 (LGVV…LFCV), 82-102 (VFYL…EPVV), and 300-320 (VIIL…LFLH). A heme-binding site is contributed by C449.

It belongs to the cytochrome P450 family. Heme is required as a cofactor.

It is found in the membrane. It functions in the pathway secondary metabolite biosynthesis. Functionally, cytochrome P450 monooxygenase; part of the gene cluster that mediates the biosynthesis of the indole diterpenes penitrems. The geranylgeranyl diphosphate (GGPP) synthase ptmG catalyzes the first step in penitrem biosynthesis via conversion of farnesyl pyrophosphate and isopentyl pyrophosphate into geranylgeranyl pyrophosphate (GGPP). Condensation of indole-3-glycerol phosphate with GGPP by the prenyl transferase ptmC then forms 3-geranylgeranylindole (3-GGI). Epoxidation by the FAD-dependent monooxygenase ptmM leads to a epoxidized-GGI that is substrate of the terpene cyclase ptmB for cyclization to yield paspaline. Paspaline is subsequently converted to 13-desoxypaxilline by the cytochrome P450 monooxygenase ptmP, the latter being then converted to paxilline by the cytochrome P450 monooxygenase ptmQ. Paxilline is converted to beta-paxitriol via C-10 ketoreduction by the short-chain dehydrogenase ptmH which can be monoprenylated at the C-20 by the indole diterpene prenyltransferase ptmD. A two-step elimination (acetylation and elimination) process performed by the O-acetyltransferase ptmV and ptmI leads to the production of the prenylated form of penijanthine. The FAD-linked oxidoreductase ptmO then converts the prenylated form of penijanthine into PC-M5 which is in turn transformed into PC-M4 by the aromatic dimethylallyltransferase ptmE. Five sequential oxidative transformations performed by the cytochrome P450 monooxygenases ptmK, ptmU, ptmL, ptmN and ptmJ yield the various penitrem compounds. PtmK, ptmU and ptmM are involved in the formation of the key bicyclic ring of penitrem C via the formation of the intermediates secopenitrem D and penitrem D. PtmL catalyzes the epoxidation of penitrem D and C to yield penitrem B and F, respectively. PtmJ catalyzes the last benzylic hydroxylation to convert penitrem B to prenitrem E and penitrem F to penitrem A. This Penicillium ochrochloron protein is Cytochrome P450 monooxygenase ptmJ.